Reading from the N-terminus, the 588-residue chain is Zeta-carotene desaturase, chloroplastic/chromoplastic (588 aa).

The transit peptide at 1–49 (MATCSAYLCCPATSASLKKRVFPDGSAGFLFFGGRRLSNRLVTPKSVIR) directs the protein to the chloroplast and chromoplast.

It belongs to the zeta carotene desaturase family. As to quaternary structure, monomer and dimer. Decylplastoquinone serves as cofactor. Requires 6-decylubiquinone as cofactor.

It localises to the plastid. The protein resides in the chloroplast. The protein localises to the chromoplast. The enzyme catalyses 9,9'-di-cis-zeta-carotene + 2 a quinone = 7,7',9,9'-tetra-cis-lycopene + 2 a quinol. Its pathway is carotenoid biosynthesis; lycopene biosynthesis. Functionally, catalyzes the conversion of zeta-carotene to lycopene via the intermediary of neurosporene. It carries out two consecutive desaturations (introduction of double bonds) at positions C-7 and C-7'. Shows stereoselectivity toward trans C15-C15'zeta-carotene double bond. The zeta-carotene produced by the phytoene desaturase PDS has a C15-C15' double bond in the cis configuration and it requires isomerization before being recognized as substrate by ZDS. No activity with all-trans-zeta-carotene. The main product is 7,9,7',9'-tetra-cis-lycopene (pro-lycopene). The chain is Zeta-carotene desaturase, chloroplastic/chromoplastic (ZDS) from Capsicum annuum (Capsicum pepper).